The following is a 436-amino-acid chain: 3-ketoacyl-CoA thiolase (436 aa).

Cysteine 99 serves as the catalytic Acyl-thioester intermediate. Catalysis depends on proton acceptor residues histidine 392 and cysteine 422.

Belongs to the thiolase-like superfamily. Thiolase family. Heterotetramer of two alpha chains (FadJ) and two beta chains (FadI).

It is found in the cytoplasm. The catalysed reaction is an acyl-CoA + acetyl-CoA = a 3-oxoacyl-CoA + CoA. It functions in the pathway lipid metabolism; fatty acid beta-oxidation. In terms of biological role, catalyzes the final step of fatty acid oxidation in which acetyl-CoA is released and the CoA ester of a fatty acid two carbons shorter is formed. This Shigella flexneri protein is 3-ketoacyl-CoA thiolase.